The primary structure comprises 228 residues: Protein-L-isoaspartate O-methyltransferase (228 aa).

Serine 74 is an active-site residue.

It belongs to the methyltransferase superfamily. L-isoaspartyl/D-aspartyl protein methyltransferase family.

It is found in the cytoplasm. It catalyses the reaction [protein]-L-isoaspartate + S-adenosyl-L-methionine = [protein]-L-isoaspartate alpha-methyl ester + S-adenosyl-L-homocysteine. Catalyzes the methyl esterification of L-isoaspartyl residues in peptides and proteins that result from spontaneous decomposition of normal L-aspartyl and L-asparaginyl residues. It plays a role in the repair and/or degradation of damaged proteins. This chain is Protein-L-isoaspartate O-methyltransferase, found in Methylorubrum extorquens (strain PA1) (Methylobacterium extorquens).